The sequence spans 100 residues: Small ribosomal subunit protein uS14c (100 aa).

This sequence belongs to the universal ribosomal protein uS14 family. Part of the 30S ribosomal subunit.

It is found in the plastid. The protein localises to the chloroplast. Functionally, binds 16S rRNA, required for the assembly of 30S particles. The sequence is that of Small ribosomal subunit protein uS14c from Chlorokybus atmophyticus (Soil alga).